We begin with the raw amino-acid sequence, 97 residues long: Large ribosomal subunit protein uL23 (97 aa).

The protein belongs to the universal ribosomal protein uL23 family. As to quaternary structure, part of the 50S ribosomal subunit. Contacts protein L29, and trigger factor when it is bound to the ribosome.

Functionally, one of the early assembly proteins it binds 23S rRNA. One of the proteins that surrounds the polypeptide exit tunnel on the outside of the ribosome. Forms the main docking site for trigger factor binding to the ribosome. This Anaeromyxobacter sp. (strain Fw109-5) protein is Large ribosomal subunit protein uL23.